The chain runs to 634 residues: AAl-toxin cluster-specific transcription factor ALT13 (634 aa).

Residues cysteine 30–cysteine 56 constitute a DNA-binding region (zn(2)-C6 fungal-type). The interval arginine 66–alanine 89 is disordered. A compositionally biased stretch (polar residues) spans valine 69 to glycine 81.

Its subcellular location is the nucleus. Its function is as follows. Transcription factor that regulates the expression of the gene cluster that mediates the biosynthesis of AAL-toxins, sphinganine-analog mycotoxins responsible for Alternaria stem canker on tomato by the tomato pathotype. This Alternaria alternata (Alternaria rot fungus) protein is AAl-toxin cluster-specific transcription factor ALT13.